The chain runs to 3564 residues: Sushi, von Willebrand factor type A, EGF and pentraxin domain-containing protein 1 (3564 aa).

The signal sequence occupies residues 1–17 (MWTRLAFCCWALALVSG). The VWFA domain occupies 84 to 265 (ELVFLVDESS…LARRALHEDL (182 aa)). A glycan (N-linked (GlcNAc...) asparagine) is linked at Asn187. 3 consecutive Sushi domains span residues 377–436 (VHCP…FCRV), 437–496 (RTCP…RCVE), and 497–561 (RHCA…VCKD). Intrachain disulfides connect Cys379–Cys421, Cys407–Cys434, Cys439–Cys481, Cys467–Cys494, Cys499–Cys544, and Cys530–Cys559. 2 HYR domains span residues 560 to 644 (KDVE…KVID) and 645 to 724 (VEPP…VIKG). The 65-residue stretch at 725-789 (SPCEVPFTPV…YSTEWPDCAI (65 aa)) folds into the Sushi 4 domain. Disulfide bonds link Cys727–Cys769, Cys753–Cys787, Cys1192–Cys1203, Cys1197–Cys1212, Cys1214–Cys1223, Cys1230–Cys1241, Cys1235–Cys1250, Cys1252–Cys1261, Cys1268–Cys1279, Cys1273–Cys1288, Cys1290–Cys1299, Cys1306–Cys1317, Cys1311–Cys1326, Cys1328–Cys1337, Cys1344–Cys1355, Cys1349–Cys1364, Cys1366–Cys1375, Cys1382–Cys1393, Cys1387–Cys1402, and Cys1404–Cys1413. The EGF-like 1 domain maps to 1188-1224 (VFHECFLNPCHNSGTCQQLGRGYVCLCPPGYTGLKCE). Residues 1226 to 1262 (DIDECSSLPCLNGGICRDKVGGFTCECSSGYTGQICE) form the EGF-like 2; calcium-binding domain. The 37-residue stretch at 1264-1300 (NINECSSSPCLNKGTCTDGLASYRCTCVSGYVGVHCE) folds into the EGF-like 3; calcium-binding domain. One can recognise an EGF-like 4; calcium-binding domain in the interval 1302–1338 (DVNECQSSPCLNNAVCKDQVGGFSCKCPPGFLGTRCE). Residues 1340–1376 (NVDECLSQPCQNGATCKDGANSFRCQCPAGFTGPHCE) enclose the EGF-like 5; calcium-binding domain. Residues 1378–1414 (NINECQSNPCRNQATCVDELNSYSCKCRPGFSGRRCE) form the EGF-like 6; calcium-binding domain. Positions 1419 to 1623 (SGFNLDFEVS…VKVDSSSIFC (205 aa)) constitute a Pentraxin (PTX) domain. Sushi domains lie at 1624-1682 (SDCP…HCER) and 1683-1740 (IRCG…SCLD). 35 disulfide bridges follow: Cys1626–Cys1667, Cys1653–Cys1680, Cys1685–Cys1725, Cys1711–Cys1738, Cys1744–Cys1756, Cys1750–Cys1765, Cys1767–Cys1778, Cys1784–Cys1824, Cys1810–Cys1837, Cys1842–Cys1882, Cys1868–Cys1895, Cys1900–Cys1940, Cys1926–Cys1953, Cys1958–Cys1998, Cys1984–Cys2011, Cys2016–Cys2056, Cys2042–Cys2073, Cys2078–Cys2121, Cys2107–Cys2136, Cys2141–Cys2181, Cys2167–Cys2194, Cys2199–Cys2240, Cys2226–Cys2254, Cys2259–Cys2299, Cys2285–Cys2313, Cys2318–Cys2358, Cys2344–Cys2371, Cys2376–Cys2417, Cys2403–Cys2430, Cys2435–Cys2475, Cys2461–Cys2488, Cys2493–Cys2533, Cys2519–Cys2546, Cys2551–Cys2591, and Cys2577–Cys2603. Residues 1740–1779 (DVDECAVGSDCSEHASCLNTNGSYICSCKPPYTGDGKNCA) form the EGF-like 7; calcium-binding domain. Asn1760 carries N-linked (GlcNAc...) asparagine glycosylation. Sushi domains follow at residues 1776–1839 (KNCA…SCEA), 1840–1897 (ISCG…VCEL), 1898–1955 (VKCS…SCQL), 1956–2013 (VSCG…QCLA), 2014–2075 (VSCD…RCIA), 2076–2138 (HFCE…QCIP), 2139–2196 (VRCG…TCHP), 2197–2256 (VSCN…SCTP), 2257–2315 (LNCG…KCVP), 2316–2373 (TKCA…VCKL), 2374–2432 (VLCQ…ECVP), 2433–2490 (VECP…MCRP), 2491–2548 (IECP…SCNA), and 2549–2605 (IHCS…TCVP). The interval 2634–2641 (DMMEVPYL) is important for the interaction with integrin ITGA9:ITGB1. Sushi domains follow at residues 2659-2708 (EESL…SCIS), 2709-2766 (IECD…RCEV), 2767-2824 (ISCS…VCLP), 2825-2882 (VDCG…SCVP), 2883-2940 (VRCP…ICKP), 2941-2998 (ATCG…SCLP), 2999-3054 (CTCS…LCEH), 3055-3112 (ADCG…TCEP), 3113-3171 (VSCG…NCSP), 3172-3231 (KTCP…SCIP), 3232-3289 (VVCG…VCRE), 3290-3347 (SRCE…LCKP), 3348-3406 (NPCP…RCEK), and 3407-3463 (ISCG…ICRA). Intrachain disulfides connect Cys2679-Cys2706, Cys2711-Cys2751, Cys2737-Cys2764, Cys2769-Cys2809, Cys2795-Cys2822, Cys2827-Cys2867, Cys2853-Cys2880, Cys2885-Cys2925, Cys2911-Cys2938, Cys2943-Cys2983, Cys2969-Cys2996, Cys3001-Cys3040, Cys3026-Cys3052, Cys3057-Cys3097, Cys3083-Cys3110, Cys3115-Cys3156, Cys3141-Cys3169, Cys3174-Cys3214, Cys3200-Cys3229, Cys3234-Cys3274, Cys3260-Cys3287, Cys3292-Cys3332, Cys3318-Cys3345, Cys3350-Cys3391, Cys3377-Cys3404, Cys3409-Cys3449, Cys3435-Cys3461, Cys3497-Cys3507, Cys3501-Cys3513, Cys3515-Cys3524, Cys3529-Cys3539, Cys3533-Cys3545, and Cys3547-Cys3556. EGF-like domains are found at residues 3493–3525 (EEPI…SRCH) and 3526–3557 (TATC…HDCS).

As to quaternary structure, interacts (via Sushi domain 21) with ITGA9:ITGB1; thereby inhibits Ca(2+) intracellular signaling and as a result represses vasocontraction. Interacts (via Sushi domain 21) with ITGA4:ITGB1; thereby inhibits Ca(2+) intracellular signaling and as a result represses vasocontraction. Interacts with ANGPT1 and ANGPT2. Interacts with PEAR1 (via extracellular domain). Interacts with HSPG2, TLN1, FN1, COPA, CCT2, IQGAP1, LAMC1 and NID1. Interacts (via C-terminus) with TIE1.

The protein resides in the secreted. It localises to the nucleus. The protein localises to the cytoplasm. Its subcellular location is the membrane. Required for morphological development, cell alignment and migration of lymphatic endothelial cells during embryonic development, potentially via modulation of ANGPT2-TIE1 signaling and subsequent activation of FOXC2 transcription. Required for embryonic lymphatic vascular development, via mediating the correct formation of the first lymphovenous contact site and tight association of the lymphatic endothelium with the venous endothelium. Represses PRKCA-mediated L-type voltage-gated channel Ca(2+) influx and ROCK-mediated calcium sensitivity in vascular smooth muscle cells, via its interaction with integrins, thereby inhibiting vasocontraction. Promotes platelet activation, via its interaction with PEAR1 and subsequent activation of AKT/mTOR signaling. Plays a role in epidermal development and keratinocyte differentiation, independent of cell-cell adhesion. May play a role in initial cell attachment of stromal osteogenic cells. May promote myoblast cell adhesion when in the presence of integrin ITGA9:ITGB1. The polypeptide is Sushi, von Willebrand factor type A, EGF and pentraxin domain-containing protein 1 (Svep1) (Rattus norvegicus (Rat)).